Reading from the N-terminus, the 169-residue chain is Disulfide bond formation protein B 1 (169 aa).

The Cytoplasmic portion of the chain corresponds to 1 to 14 (MSEETIRLGRERRY). The chain crosses the membrane as a helical span at residues 15-31 (LVLLGIICLALIGGALY). Over 32–49 (MQIVLGEAPCPLCILQRY) the chain is Periplasmic. A disulfide bond links Cys41 and Cys44. A helical membrane pass occupies residues 50 to 64 (ALLLIALFAFIGAAM). At 65–71 (RTRRSIT) the chain is on the cytoplasmic side. The helical transmembrane segment at 72–89 (VFEVLVVICAIAGAGVAG) threads the bilayer. Topologically, residues 90-144 (HHVYTQFYPAVSCGIDVLQPIVDDLPLAKIFPLGFQVDGFCSTPYPPILGLSLAQ) are periplasmic. Cys102 and Cys130 form a disulfide bridge. The helical transmembrane segment at 145 to 163 (WALVAFVLVVILVPLLTSR) threads the bilayer. The Cytoplasmic segment spans residues 164–169 (NRKALR).

This sequence belongs to the DsbB family.

It localises to the cell inner membrane. Its function is as follows. Required for disulfide bond formation in some periplasmic proteins. Acts by oxidizing the DsbA protein. The polypeptide is Disulfide bond formation protein B 1 (Pseudomonas fluorescens (strain Pf0-1)).